Here is a 340-residue protein sequence, read N- to C-terminus: MTEAPPLPKRRVLLAQPRGYCAGVERAVDTVEKALELYGPPVYVRKQIVHNKHVVAELEAKGAIFVEEADEVPEGSIVVLSAHGVAPSVYEQARQRRLKTIDATCPLVTKVHQEARRFAEQGLEILLIGHANHEEVVGTTGEAPSSITLVDGPEEAEHVQVKDPSRVAWLSQTTLSVDETLQTVEVLRRRFPQLIDPPSDDICYATQNRQAAVKRIAAIADLVIVVGSRNSSNSARLVEVALDSGAKASYLVDDASEIDERWLDGVWTVGVTSGASVPESLVTGVLAWLAERGFDTVEEIDAERETLVFALPPELRRELKARGEPLTRSATAGDRMNADR.

Residue Cys21 participates in [4Fe-4S] cluster binding. (2E)-4-hydroxy-3-methylbut-2-enyl diphosphate-binding residues include His50 and His83. Dimethylallyl diphosphate contacts are provided by His50 and His83. Residues His50 and His83 each contribute to the isopentenyl diphosphate site. Position 105 (Cys105) interacts with [4Fe-4S] cluster. His133 is a binding site for (2E)-4-hydroxy-3-methylbut-2-enyl diphosphate. Residue His133 participates in dimethylallyl diphosphate binding. Residue His133 coordinates isopentenyl diphosphate. Catalysis depends on Glu135, which acts as the Proton donor. Thr173 is a (2E)-4-hydroxy-3-methylbut-2-enyl diphosphate binding site. Cys203 is a binding site for [4Fe-4S] cluster. Residues Ser231, Ser232, Asn233, and Ser276 each contribute to the (2E)-4-hydroxy-3-methylbut-2-enyl diphosphate site. Dimethylallyl diphosphate is bound by residues Ser231, Ser232, Asn233, and Ser276. The isopentenyl diphosphate site is built by Ser231, Ser232, Asn233, and Ser276. The segment at 320–340 is disordered; that stretch reads KARGEPLTRSATAGDRMNADR.

Belongs to the IspH family. [4Fe-4S] cluster is required as a cofactor.

It carries out the reaction isopentenyl diphosphate + 2 oxidized [2Fe-2S]-[ferredoxin] + H2O = (2E)-4-hydroxy-3-methylbut-2-enyl diphosphate + 2 reduced [2Fe-2S]-[ferredoxin] + 2 H(+). The enzyme catalyses dimethylallyl diphosphate + 2 oxidized [2Fe-2S]-[ferredoxin] + H2O = (2E)-4-hydroxy-3-methylbut-2-enyl diphosphate + 2 reduced [2Fe-2S]-[ferredoxin] + 2 H(+). It participates in isoprenoid biosynthesis; dimethylallyl diphosphate biosynthesis; dimethylallyl diphosphate from (2E)-4-hydroxy-3-methylbutenyl diphosphate: step 1/1. It functions in the pathway isoprenoid biosynthesis; isopentenyl diphosphate biosynthesis via DXP pathway; isopentenyl diphosphate from 1-deoxy-D-xylulose 5-phosphate: step 6/6. Functionally, catalyzes the conversion of 1-hydroxy-2-methyl-2-(E)-butenyl 4-diphosphate (HMBPP) into a mixture of isopentenyl diphosphate (IPP) and dimethylallyl diphosphate (DMAPP). Acts in the terminal step of the DOXP/MEP pathway for isoprenoid precursor biosynthesis. This is 4-hydroxy-3-methylbut-2-enyl diphosphate reductase from Acidothermus cellulolyticus (strain ATCC 43068 / DSM 8971 / 11B).